Consider the following 328-residue polypeptide: Endochitinase (328 aa).

The signal sequence occupies residues 1–26; the sequence is MRRHKEVNFVAYLLFSLLVLVSAALA. Residues 27 to 68 enclose the Chitin-binding type-1 domain; sequence QNCGSQGGGKACASGQCCSKFGWCGNTNDYCGSGNCQSQCPG. 7 cysteine pairs are disulfide-bonded: Cys29/Cys44, Cys38/Cys50, Cys43/Cys57, Cys62/Cys66, Cys100/Cys162, Cys174/Cys182, and Cys281/Cys313. The Proton donor role is filled by Glu144. The propeptide at 322–328 is removed in mature form; the sequence is ALLVDTL.

The protein belongs to the glycosyl hydrolase 19 family. Chitinase class I subfamily.

It localises to the vacuole. It catalyses the reaction Random endo-hydrolysis of N-acetyl-beta-D-glucosaminide (1-&gt;4)-beta-linkages in chitin and chitodextrins.. In terms of biological role, defense against chitin-containing fungal pathogens. The polypeptide is Endochitinase (Solanum tuberosum (Potato)).